We begin with the raw amino-acid sequence, 175 residues long: Protein OPG036 (175 aa).

Belongs to the poxviridae OPG036 family.

It localises to the host nucleus. Plays a role in the inhibition of host innate immune response. Within the host nucleus, inhibits activation of interferon-beta promoter by inhibiting IRF3 activation. This Bos taurus (Bovine) protein is Protein OPG036 (OPG036).